Consider the following 295-residue polypeptide: Giardin subunit alpha-1 (295 aa).

4 Annexin repeats span residues 2–71, 73–143, 153–223, and 226–293; these read PKVT…MDLF, DRHE…MEKW, GSPE…AHFA, and GMHR…TLWR.

Belongs to the annexin family. Giardin subunit alpha subfamily.

It localises to the cytoplasm. The protein resides in the cytoskeleton. Functionally, giardins are involved in parasite attachment to the intestinal mucosa and in the cytoskeletal disassembly and reassembly that marks the transition from infectious trophozoite to transmissible cyst. They may interact with other cytoskeletal proteins such as microtubules in the microribbons or crossbridges, to maintain the integrity of the ventral disk. The polypeptide is Giardin subunit alpha-1 (Giardia intestinalis (Giardia lamblia)).